Consider the following 770-residue polypeptide: Coiled-coil alpha-helical rod protein 1 (770 aa).

3 coiled-coil regions span residues 56-289 (STVT…DLQA), 334-420 (LRNW…RQEQ), and 476-669 (GLMA…RKEE). 4 disordered regions span residues 573–592 (LEAA…SLRQ), 641–672 (LRQI…EGQR), 700–721 (NKKC…AASC), and 744–770 (SRDE…PLLS). Basic and acidic residues predominate over residues 648–672 (ATQEKERNQELRRLQDEARKEEGQR). Over residues 701–721 (KKCSPRSVESSSSESPAAASC) the composition is skewed to low complexity.

It localises to the cytoplasm. The protein localises to the nucleus. In terms of biological role, may be a regulator of keratinocyte proliferation or differentiation. The chain is Coiled-coil alpha-helical rod protein 1 (Cchcr1) from Mus musculus (Mouse).